The following is a 173-amino-acid chain: T-cell receptor beta-1 chain C region (173 aa).

The tract at residues 1-146 (EDLRNVTPPK…GVLSATILYE (146 aa)) is c region. An intrachain disulfide couples cysteine 31 to cysteine 71. Residues asparagine 67 and asparagine 116 are each glycosylated (N-linked (GlcNAc...) asparagine). The helical transmembrane segment at 146-167 (EILLGKATLYAVLVSTLVVMAM) threads the bilayer. Over 168-173 (VKRKNS) the chain is Cytoplasmic.

The protein resides in the membrane. This chain is T-cell receptor beta-1 chain C region, found in Mus musculus (Mouse).